A 124-amino-acid chain; its full sequence is Orexigenic neuropeptide QRFP (124 aa).

The N-terminal stretch at 1–17 is a signal peptide; sequence MRGFRPLLSLLLPLSAC. Positions 18 to 79 are excised as a propeptide; it reads FPLLDRRGPT…REHTGFRLGR (62 aa). Residues 63–101 are disordered; the sequence is REQQASHREHTGFRLGRQDGSSEAAGFLPADSEKASGPL. Phenylalanine 122 carries the phenylalanine amide modification.

Belongs to the RFamide neuropeptide family. In terms of assembly, ligand for the G-protein coupled receptor QRFPR/GPR103. As to expression, expressed in the brain with highest levels in the periventricular hypothalamic nucleus and lateral hypothalamic areas. Expressed at moderate levels in the adrenal gland, eye, heart, intestine, liver, lung, kidney, mesenteric lymph node, ovary, placenta, Peyer patches, skin, spleen, stomach, testis, thymus and uterus.

Its subcellular location is the secreted. Functionally, stimulates feeding and grooming behavior, metabolic rate and locomotor activity and increases blood pressure. May have orexigenic activity. May promote aldosterone secretion by the adrenal gland. In Mus musculus (Mouse), this protein is Orexigenic neuropeptide QRFP.